Here is a 51-residue protein sequence, read N- to C-terminus: MPIRDPEKLQLALEHHFKVKICRRCNARNPWNAERCRRCKSRDLRPKRYKK.

The protein belongs to the eukaryotic ribosomal protein eL40 family.

This chain is Large ribosomal subunit protein eL40, found in Thermofilum pendens (strain DSM 2475 / Hrk 5).